The primary structure comprises 503 residues: MSQKQLKEAFVRNLSGTSVLEVTQGLCFPAFCILCRGLWIIFSQHVCSFSNTWSTRFLMDFVVLIVPLVITLTVLSSFILLENLTVIVWGAWLLYQIYHRRTCYAKVPVQKVFANFLKISLESEYNPAITCYRVINSVFTAIAILAVDFPLFPRRFAKTELYGTGAMDFGVGGFIFGAAMVCPEVRRKSIEESRFNYLRKSLYSVWPLVFLGMGRLVIIKSIGYQEHSTEYGIHWNFFFTIIVVRLVTSLLLIIFPLNKSWIVAVSITVVYQLALDYTPLKRILLYGTDGSGTRVGFLNANREGIISTLGYVTIHMAGVQTGLYVLKGRAQVRDWIKATCWVFSVAVGFFISLHIVQVNIEAVSRRMANLAFCLWVVASSLMLLSCLLLSGIILSFAQFLIKGSLVPCSWKLIQSPTTHKNHSESLILEAEKNQPSLCLITALNRNQLFFFLLSNITTGLINLTMDTLHTGALWTLVVLSIYMFTNCLVIYVLDLQGKTIKFW.

Residues 1 to 21 (MSQKQLKEAFVRNLSGTSVLE) lie on the Lumenal side of the membrane. N-linked (GlcNAc...) asparagine glycosylation occurs at N13. The chain crosses the membrane as a helical span at residues 22-42 (VTQGLCFPAFCILCRGLWIIF). The Cytoplasmic segment spans residues 43-48 (SQHVCS). The chain crosses the membrane as a helical span at residues 49 to 71 (FSNTWSTRFLMDFVVLIVPLVIT). The Lumenal portion of the chain corresponds to 72 to 74 (LTV). Residues 75–97 (LSSFILLENLTVIVWGAWLLYQI) form a helical membrane-spanning segment. At 98–131 (YHRRTCYAKVPVQKVFANFLKISLESEYNPAITC) the chain is on the cytoplasmic side. Residues 132-152 (YRVINSVFTAIAILAVDFPLF) traverse the membrane as a helical segment. The Lumenal portion of the chain corresponds to 153–160 (PRRFAKTE). The helical transmembrane segment at 161 to 181 (LYGTGAMDFGVGGFIFGAAMV) threads the bilayer. Over 182 to 201 (CPEVRRKSIEESRFNYLRKS) the chain is Cytoplasmic. A helical membrane pass occupies residues 202–222 (LYSVWPLVFLGMGRLVIIKSI). The Lumenal portion of the chain corresponds to 223–236 (GYQEHSTEYGIHWN). Residues 237–257 (FFFTIIVVRLVTSLLLIIFPL) traverse the membrane as a helical segment. The Cytoplasmic portion of the chain corresponds to 258–259 (NK). A helical transmembrane segment spans residues 260-280 (SWIVAVSITVVYQLALDYTPL). At 281-304 (KRILLYGTDGSGTRVGFLNANREG) the chain is on the lumenal side. A helical transmembrane segment spans residues 305–325 (IISTLGYVTIHMAGVQTGLYV). Residues 326–339 (LKGRAQVRDWIKAT) lie on the Cytoplasmic side of the membrane. The chain crosses the membrane as a helical span at residues 340-360 (CWVFSVAVGFFISLHIVQVNI). At 361–380 (EAVSRRMANLAFCLWVVASS) the chain is on the lumenal side. Residues 381–401 (LMLLSCLLLSGIILSFAQFLI) traverse the membrane as a helical segment. The Cytoplasmic segment spans residues 402 to 447 (KGSLVPCSWKLIQSPTTHKNHSESLILEAEKNQPSLCLITALNRNQ). S415 is modified (phosphoserine). Residues 448–468 (LFFFLLSNITTGLINLTMDTL) traverse the membrane as a helical segment. At 469 to 472 (HTGA) the chain is on the lumenal side. A helical membrane pass occupies residues 473-493 (LWTLVVLSIYMFTNCLVIYVL). The Cytoplasmic portion of the chain corresponds to 494–503 (DLQGKTIKFW).

Belongs to the PIGW family.

The protein resides in the endoplasmic reticulum membrane. It participates in glycolipid biosynthesis; glycosylphosphatidylinositol-anchor biosynthesis. Acyltransferase that catalyzes the acyl transfer from an acyl-CoA at the 2-OH position of the inositol ring of glucosaminyl phosphatidylinositol (GlcN-PI) to generate GlcN-(acyl)PI and participates in the fourth step of GPI-anchor biosynthesi. Required for the transport of GPI-anchored proteins to the plasma membrane. Acetylation during GPI-anchor biosynthesis is not essential for the subsequent mannosylation and is usually removed soon after the attachment of GPIs to proteins. This chain is Glucosaminyl-phosphatidylinositol-acyltransferase PIGW, found in Mus musculus (Mouse).